The primary structure comprises 434 residues: Arrestin domain-containing protein 1 (434 aa).

Residues 292–349 (SPCPGRESSPGTLSLVVPSAPPQEEAEAVASGPHFSDPVSLSTKSHSQQQPLSAPLGS) are disordered. The span at 330-343 (VSLSTKSHSQQQPL) shows a compositional bias: polar residues. Short sequence motifs (PPxY motif) lie at residues 401–404 (PPEY) and 414–417 (PPSY).

Belongs to the arrestin family. Interacts (via PPxY motifs) with ITCH (via WW domains); the interaction is direct and participates in the recruitment of the ubiquitin-protein ligase ITCH to the NOTCH1 receptor. Interacts with ARRB1 and ARRB2; the interaction is direct. Interacts with TSG101; may recruit TSG101 to the plasma membrane. Interacts (via PPxY motifs) with WWP2 (via WW domains); ubiquitinates ARRDC1. Interacts with SLC11A2; controls the incorporation of SLC11A2 into extracellular vesicles through an ubiquitination-dependent mechanism. Interacts with WWP1 (via WW domains). Interacts with NEDD4 (via WW domains). Interacts with PDCD6IP. Post-translationally, ubiquitinated. Ubiquitination by WWP2; promotes localization to extracellular microvesicles. Ubiquitinated by WWP1.

Its subcellular location is the cell membrane. In terms of biological role, functions as an adapter recruiting ubiquitin-protein ligases to their specific substrates. Through an ubiquitination-dependent mechanism plays for instance a role in the incorporation of SLC11A2 into extracellular vesicles. More generally, plays a role in the extracellular transport of proteins between cells through the release in the extracellular space of microvesicles. By participating to the ITCH-mediated ubiquitination and subsequent degradation of NOTCH1, negatively regulates the NOTCH signaling pathway. In Mus musculus (Mouse), this protein is Arrestin domain-containing protein 1.